The following is a 90-amino-acid chain: UPF0297 protein Swol_0469 (90 aa).

The protein belongs to the UPF0297 family.

The chain is UPF0297 protein Swol_0469 from Syntrophomonas wolfei subsp. wolfei (strain DSM 2245B / Goettingen).